The following is a 208-amino-acid chain: Protein-L-isoaspartate O-methyltransferase (208 aa).

Residue serine 59 is part of the active site.

This sequence belongs to the methyltransferase superfamily. L-isoaspartyl/D-aspartyl protein methyltransferase family.

The protein localises to the cytoplasm. It carries out the reaction [protein]-L-isoaspartate + S-adenosyl-L-methionine = [protein]-L-isoaspartate alpha-methyl ester + S-adenosyl-L-homocysteine. Its function is as follows. Catalyzes the methyl esterification of L-isoaspartyl residues in peptides and proteins that result from spontaneous decomposition of normal L-aspartyl and L-asparaginyl residues. It plays a role in the repair and/or degradation of damaged proteins. This Vibrio atlanticus (strain LGP32) (Vibrio splendidus (strain Mel32)) protein is Protein-L-isoaspartate O-methyltransferase.